The following is a 1224-amino-acid chain: Coatomer subunit alpha (1224 aa).

WD repeat units follow at residues 3–38, 42–80, 84–122, and 126–164; these read TKFE…LWDY, TLID…VWNY, RCLF…VWNW, and TCVC…VWDI. S173 is subject to Phosphoserine. T185 bears the Phosphothreonine mark. WD repeat units follow at residues 195–234, 241–278, and 282–319; these read AVVK…IWRM, EVDT…VWDM, and TGVQ…VFKL. The residue at position 402 (S402) is a Phosphoserine. T591 is modified (phosphothreonine). The residue at position 895 (S895) is a Phosphoserine. R965 is modified (omega-N-methylarginine). Phosphoserine is present on S1193.

In terms of assembly, oligomeric complex that consists of at least the alpha, beta, beta', gamma, delta, epsilon and zeta subunits. Interacts with SCYL1. Interacts with JAGN1. Interacts with TMEM41B. Interacts with SVEP1. Probably interacts with PEX11A. In terms of tissue distribution, uniformly expressed in a wide range of adult and fetal tissues. Xenin is found in gastric, duodenal and jejunal mucosa. Circulates in the blood. Seems to be confined to specific endocrine cells.

It localises to the cytoplasm. The protein localises to the golgi apparatus membrane. It is found in the cytoplasmic vesicle. Its subcellular location is the COPI-coated vesicle membrane. The protein resides in the secreted. Its function is as follows. The coatomer is a cytosolic protein complex that binds to dilysine motifs and reversibly associates with Golgi non-clathrin-coated vesicles, which further mediate biosynthetic protein transport from the ER, via the Golgi up to the trans Golgi network. Coatomer complex is required for budding from Golgi membranes, and is essential for the retrograde Golgi-to-ER transport of dilysine-tagged proteins. In mammals, the coatomer can only be recruited by membranes associated to ADP-ribosylation factors (ARFs), which are small GTP-binding proteins; the complex also influences the Golgi structural integrity, as well as the processing, activity, and endocytic recycling of LDL receptors. Functionally, xenin stimulates exocrine pancreatic secretion. It inhibits pentagastrin-stimulated secretion of acid, to induce exocrine pancreatic secretion and to affect small and large intestinal motility. In the gut, xenin interacts with the neurotensin receptor. The protein is Coatomer subunit alpha (COPA) of Homo sapiens (Human).